The chain runs to 761 residues: MNQNLLVTKRDGSTERINLDKIHRVLDWAAEGLHNVSISQVELRSHIQFYDGIKTSDIHETIIKAAADLISRDAPDYQYLAARLAIFHLRKKAYGQFEPPALYDHVVKMVEMGKYDNHLLEDYTEEEFKQMDTFIDHDRDMTFSYAAVKQLEGKYLVQNRVTGEIYESAQFLYILVAACLFSNYPRETRLQYVKRFYDAVSTFKISLPTPIMSGVRTPTRQFSSCVLIECGDSLDSINATSSAIVKYVSQRAGIGINAGRIRALGSPIRGGEAFHTGCIPFYKHFQTAVKSCSQGGVRGGAATLFYPMWHLEVESLLVLKNNRGVEGNRVRHMDYGVQINKLMYTRLLKGEDITLFSPSDVPGLYDAFFADQEEFERLYTKYEKDDSIRKQRVKAVELFSLMMQERASTGRIYIQNVDHCNTHSPFDPAIAPVRQSNLCLEIALPTKPLNDVNDENGEIALCTLSAFNLGAINNLDELEELAILAVRALDALLDYQDYPIPAAKRGAMGRRTLGIGVINFAYYLAKHGKRYSDGSANNLTHKTFEAIQYYLLKASNELAKEQGACPWFNETTYAKGILPIDTYKKDLDTIANEPLHYDWEALRESIKTHGLRNSTLSALMPSETSSQISNATNGIEPPRGYVSIKASKDGILRQVVPDYEHLHDAYELLWEMPGNDGYLQLVGIMQKFIDQSISANTNYDPSRFPSGKVPMQQLLKDLLTAYKFGVKTLYYQNTRDGAEDAQDDLVPSIQDDGCESGACKI.

The ATP-cone domain occupies L5–G95. Residues K9, E15–K21, T55, and K91 each bind ATP. T209 provides a ligand contact to GDP. A disulfide bridge links C225 with C462. DTTP is bound by residues D232–L234, R262, and R269. At K283 the chain carries N6-acetyllysine. Residue N437 coordinates GDP. Catalysis depends on N437, which acts as the Proton acceptor. C439 serves as the catalytic Cysteine radical intermediate. GDP contacts are provided by residues E441 and E623–S625. E441 functions as the Proton acceptor in the catalytic mechanism.

Belongs to the ribonucleoside diphosphate reductase large chain family. As to quaternary structure, tetramer of two alpha (R1) and two beta (R2) subunits. The B1 protein is a dimer of alpha subunits. A radical transfer pathway occurs between 'Tyr-122' of R2 and R1. In terms of processing, binding of the substrate occurs primarily when the active-site cysteines are reduced.

It carries out the reaction a 2'-deoxyribonucleoside 5'-diphosphate + [thioredoxin]-disulfide + H2O = a ribonucleoside 5'-diphosphate + [thioredoxin]-dithiol. Under complex allosteric control mediated by deoxynucleoside triphosphates and ATP binding to separate specificity and activation sites on the alpha subunit. The type of nucleotide bound at the specificity site determines substrate preference. It seems probable that ATP makes the enzyme reduce CDP and UDP, dGTP favors ADP reduction and dTTP favors GDP reduction. Stimulated by ATP and inhibited by dATP binding to the activity site. In vitro, its activity is increased by dithiothreitol (DTT) or thioredoxins (non-specific). Inhibited by hydroxyurea, leads to dNTP depletion, replication fork arrest and genomic instability. Its function is as follows. Provides the precursors necessary for DNA synthesis. Catalyzes the biosynthesis of deoxyribonucleotides from the corresponding ribonucleotides. R1 contains the binding sites for both substrates and allosteric effectors and carries out the actual reduction of the ribonucleotide. It also provides redox-active cysteines. The sequence is that of Ribonucleoside-diphosphate reductase 1 subunit alpha (nrdA) from Escherichia coli (strain K12).